The following is a 317-amino-acid chain: Melanocyte-stimulating hormone receptor (317 aa).

At 1-37 the chain is on the extracellular side; it reads MPMQGAQRRLLGSLNSTPTATPNLGLAANHTGAPCLE. N-linked (GlcNAc...) asparagine glycosylation is present at N29. The helical transmembrane segment at 38-63 threads the bilayer; it reads VSIPHGLFLSLGLVSLVENVLVVAAI. At 64–72 the chain is on the cytoplasmic side; that stretch reads AKNRNLHSP. A helical membrane pass occupies residues 73–93; the sequence is MYCFICCLALSDLLVSGSNML. Residues 94-118 are Extracellular-facing; sequence ETAVILLLEAGALATRASVVQQLQN. Residues 119–140 traverse the membrane as a helical segment; it reads TIDVLTCSSMLCSLCFLGAIAV. Residues 141–163 lie on the Cytoplasmic side of the membrane; that stretch reads DRYVSIFYALRYHSIVTLPRARR. A helical transmembrane segment spans residues 164–183; that stretch reads AIAAIWVASVLSSTLFIAYC. At 184–191 the chain is on the extracellular side; the sequence is DHAAVLLC. Residues 192–211 form a helical membrane-spanning segment; that stretch reads LVVFFLAMLVLMAVLYVHML. At 212–240 the chain is on the cytoplasmic side; that stretch reads ARACQHAQGITRLHKRQLPAHQGFGLRGA. Residues 241–266 form a helical membrane-spanning segment; that stretch reads ATLTILLGIFFLCWGPFFLHLMLVVL. Residues 267-279 are Extracellular-facing; the sequence is CPQHLTCSCIFKN. A helical transmembrane segment spans residues 280–300; sequence FKVFLTLIICNTIIDPLIYAF. Residues 301 to 317 are Cytoplasmic-facing; that stretch reads RSQELCRTLKEVLLCSW. A lipid anchor (S-palmitoyl cysteine) is attached at C315.

The protein belongs to the G-protein coupled receptor 1 family. As to quaternary structure, interacts with MGRN1, but does not undergo MGRN1-mediated ubiquitination; this interaction competes with GNAS-binding and thus inhibits agonist-induced cAMP production. Interacts with OPN3; the interaction results in a decrease in MC1R-mediated cAMP signaling and ultimately a decrease in melanin production in melanocytes.

It localises to the cell membrane. Functionally, receptor for MSH (alpha, beta and gamma) and ACTH. The activity of this receptor is mediated by G proteins which activate adenylate cyclase. Mediates melanogenesis, the production of eumelanin (black/brown) and phaeomelanin (red/yellow), via regulation of cAMP signaling in melanocytes. The sequence is that of Melanocyte-stimulating hormone receptor (MC1R) from Alouatta caraya (Black howler monkey).